The chain runs to 175 residues: MMTYIVFILSIIFVISFVGFSSKPSPIYGGLVLIISGAVGCGIVLSFGGSFLGLMVFLIYLGGMLVVFGYTTAMATEQYPEVWVSNKAVLGAFVMGLLSELLLACYILKDDEVDAVFEFNGMGDWVIYDTGDSGFFSEEAMGIAALYSYGTWLVIVTGWSLFIGVLVIMEVTRGN.

The next 5 membrane-spanning stretches (helical) occupy residues 1-21 (MMTY…VGFS), 25-45 (SPIY…GIVL), 47-67 (FGGS…MLVV), 88-108 (AVLG…CYIL), and 149-169 (YGTW…LVIM).

The protein belongs to the complex I subunit 6 family. As to quaternary structure, core subunit of respiratory chain NADH dehydrogenase (Complex I) which is composed of 45 different subunits.

The protein localises to the mitochondrion inner membrane. The catalysed reaction is a ubiquinone + NADH + 5 H(+)(in) = a ubiquinol + NAD(+) + 4 H(+)(out). Core subunit of the mitochondrial membrane respiratory chain NADH dehydrogenase (Complex I) which catalyzes electron transfer from NADH through the respiratory chain, using ubiquinone as an electron acceptor. Essential for the catalytic activity and assembly of complex I. This is NADH-ubiquinone oxidoreductase chain 6 (MT-ND6) from Halichoerus grypus (Gray seal).